A 449-amino-acid polypeptide reads, in one-letter code: Glucose-6-phosphate isomerase (449 aa).

Glutamate 291 (proton donor) is an active-site residue. Active-site residues include histidine 312 and lysine 426.

The protein belongs to the GPI family.

The protein resides in the cytoplasm. It carries out the reaction alpha-D-glucose 6-phosphate = beta-D-fructose 6-phosphate. Its pathway is carbohydrate biosynthesis; gluconeogenesis. The protein operates within carbohydrate degradation; glycolysis; D-glyceraldehyde 3-phosphate and glycerone phosphate from D-glucose: step 2/4. Its function is as follows. Catalyzes the reversible isomerization of glucose-6-phosphate to fructose-6-phosphate. This Pediococcus pentosaceus (strain ATCC 25745 / CCUG 21536 / LMG 10740 / 183-1w) protein is Glucose-6-phosphate isomerase.